Here is a 793-residue protein sequence, read N- to C-terminus: DnaJ homolog subfamily C member 10 (793 aa).

A signal peptide spans 1 to 32; sequence MGVWLSKDDYIRDLKRIILCFLIVYMAILVGT. Positions 35–100 constitute a J domain; that stretch reads DFYSLLGVSK…DLRKKYDKYG (66 aa). In terms of domain architecture, Thioredoxin 1 spans 130 to 232; sequence EIITLERREF…ESLVSFAMQH (103 aa). Residues C158 and C161 are joined by a disulfide bond. Trxb stretches follow at residues 235–350 and 348–463; these read STVT…LPDF and PDFE…PQNF. 3 consecutive Thioredoxin domains span residues 454–553, 557–662, and 671–778; these read HVTT…IEDL, SVVS…SLRI, and VSTG…INEK. A disulfide bridge links C480 with C483. N530 carries N-linked (GlcNAc...) asparagine glycosylation. 2 disulfide bridges follow: C588-C591 and C700-C703. The Prevents secretion from ER signature appears at 790-793; it reads KDEL.

As to quaternary structure, interacts with HSPA5 (via its J domain). Interacts with EDEM1.

The protein resides in the endoplasmic reticulum lumen. Functionally, endoplasmic reticulum disulfide reductase involved both in the correct folding of proteins and degradation of misfolded proteins. Required for efficient folding of proteins in the endoplasmic reticulum by catalyzing the removal of non-native disulfide bonds formed during the folding of proteins, such as LDLR. Also involved in endoplasmic reticulum-associated degradation (ERAD) by reducing incorrect disulfide bonds in misfolded glycoproteins recognized by EDEM1. Interaction with HSPA5 is required its activity, not for the disulfide reductase activity, but to facilitate the release of DNAJC10 from its substrate. Promotes apoptotic signaling pathway in response to endoplasmic reticulum stress. The sequence is that of DnaJ homolog subfamily C member 10 (DNAJC10) from Pongo abelii (Sumatran orangutan).